A 463-amino-acid chain; its full sequence is ATP synthase subunit beta (463 aa).

An ATP-binding site is contributed by 152 to 159; sequence GGAGVGKT.

The protein belongs to the ATPase alpha/beta chains family. F-type ATPases have 2 components, CF(1) - the catalytic core - and CF(0) - the membrane proton channel. CF(1) has five subunits: alpha(3), beta(3), gamma(1), delta(1), epsilon(1). CF(0) has three main subunits: a(1), b(2) and c(9-12). The alpha and beta chains form an alternating ring which encloses part of the gamma chain. CF(1) is attached to CF(0) by a central stalk formed by the gamma and epsilon chains, while a peripheral stalk is formed by the delta and b chains.

The protein resides in the cell membrane. The catalysed reaction is ATP + H2O + 4 H(+)(in) = ADP + phosphate + 5 H(+)(out). Its function is as follows. Produces ATP from ADP in the presence of a proton gradient across the membrane. The catalytic sites are hosted primarily by the beta subunits. The polypeptide is ATP synthase subunit beta (Clostridium botulinum (strain Eklund 17B / Type B)).